We begin with the raw amino-acid sequence, 901 residues long: Protein translocase subunit SecA (901 aa).

Residues Q87, 105-109, and D512 each bind ATP; that span reads GEGKT. The tract at residues 868–901 is disordered; it reads AALAAQTGERKVGRNDPCPCGSGKKYKQCHGRLQ. Zn(2+) contacts are provided by C885, C887, C896, and H897. Positions 891–901 are enriched in basic residues; it reads KKYKQCHGRLQ.

This sequence belongs to the SecA family. As to quaternary structure, monomer and homodimer. Part of the essential Sec protein translocation apparatus which comprises SecA, SecYEG and auxiliary proteins SecDF-YajC and YidC. Zn(2+) is required as a cofactor.

It localises to the cell inner membrane. The protein resides in the cytoplasm. The catalysed reaction is ATP + H2O + cellular proteinSide 1 = ADP + phosphate + cellular proteinSide 2.. Functionally, part of the Sec protein translocase complex. Interacts with the SecYEG preprotein conducting channel. Has a central role in coupling the hydrolysis of ATP to the transfer of proteins into and across the cell membrane, serving both as a receptor for the preprotein-SecB complex and as an ATP-driven molecular motor driving the stepwise translocation of polypeptide chains across the membrane. This is Protein translocase subunit SecA from Escherichia coli O45:K1 (strain S88 / ExPEC).